The sequence spans 73 residues: Putative defensin-like protein 42 (73 aa).

4 disulfide bridges follow: cysteine 6–cysteine 58, cysteine 18–cysteine 41, cysteine 27–cysteine 50, and cysteine 31–cysteine 52.

Belongs to the DEFL family.

The polypeptide is Putative defensin-like protein 42 (Arabidopsis thaliana (Mouse-ear cress)).